The primary structure comprises 201 residues: 3-isopropylmalate dehydratase small subunit (201 aa).

This sequence belongs to the LeuD family. LeuD type 1 subfamily. Heterodimer of LeuC and LeuD.

The catalysed reaction is (2R,3S)-3-isopropylmalate = (2S)-2-isopropylmalate. Its pathway is amino-acid biosynthesis; L-leucine biosynthesis; L-leucine from 3-methyl-2-oxobutanoate: step 2/4. Functionally, catalyzes the isomerization between 2-isopropylmalate and 3-isopropylmalate, via the formation of 2-isopropylmaleate. This is 3-isopropylmalate dehydratase small subunit from Buchnera aphidicola subsp. Baizongia pistaciae (strain Bp).